A 78-amino-acid chain; its full sequence is U7-lycotoxin-Ls1h (78 aa).

The N-terminal stretch at 1–22 (MKLIIFTGLTLLLIVSLIDVEA) is a signal peptide. Residues 23–26 (QNEG) constitute a propeptide that is removed on maturation.

The protein belongs to the neurotoxin 19 (CSTX) family. 07 (U7-Lctx) subfamily. Post-translationally, contains 4 disulfide bonds. Expressed by the venom gland.

The protein resides in the secreted. This chain is U7-lycotoxin-Ls1h, found in Lycosa singoriensis (Wolf spider).